The chain runs to 106 residues: Small ribosomal subunit protein uS10 (106 aa).

This sequence belongs to the universal ribosomal protein uS10 family. Part of the 30S ribosomal subunit.

Involved in the binding of tRNA to the ribosomes. In Pyrobaculum arsenaticum (strain DSM 13514 / JCM 11321 / PZ6), this protein is Small ribosomal subunit protein uS10.